Here is a 227-residue protein sequence, read N- to C-terminus: Cytochrome c oxidase subunit 2 (227 aa).

Topologically, residues 1–22 (MAYPFQLGLQDATSPIMEELMN) are mitochondrial intermembrane. A helical membrane pass occupies residues 23 to 44 (FHDHTLMIVFLISSLVLYIISL). The Mitochondrial matrix portion of the chain corresponds to 45-60 (MLTTKLTHTSTMDAQE). The helical transmembrane segment at 61 to 81 (VETIWTILPAVILIMIALPSL) threads the bilayer. The Mitochondrial intermembrane segment spans residues 82 to 227 (RILYMMDEIN…YFENWSASMI (146 aa)). Cu cation contacts are provided by His-161, Cys-196, Glu-198, Cys-200, His-204, and Met-207. A Mg(2+)-binding site is contributed by Glu-198. Position 218 is a phosphotyrosine (Tyr-218).

The protein belongs to the cytochrome c oxidase subunit 2 family. In terms of assembly, component of the cytochrome c oxidase (complex IV, CIV), a multisubunit enzyme composed of 14 subunits. The complex is composed of a catalytic core of 3 subunits MT-CO1, MT-CO2 and MT-CO3, encoded in the mitochondrial DNA, and 11 supernumerary subunits COX4I, COX5A, COX5B, COX6A, COX6B, COX6C, COX7A, COX7B, COX7C, COX8 and NDUFA4, which are encoded in the nuclear genome. The complex exists as a monomer or a dimer and forms supercomplexes (SCs) in the inner mitochondrial membrane with NADH-ubiquinone oxidoreductase (complex I, CI) and ubiquinol-cytochrome c oxidoreductase (cytochrome b-c1 complex, complex III, CIII), resulting in different assemblies (supercomplex SCI(1)III(2)IV(1) and megacomplex MCI(2)III(2)IV(2)). Found in a complex with TMEM177, COA6, COX18, COX20, SCO1 and SCO2. Interacts with TMEM177 in a COX20-dependent manner. Interacts with COX20. Interacts with COX16. It depends on Cu cation as a cofactor.

It localises to the mitochondrion inner membrane. It carries out the reaction 4 Fe(II)-[cytochrome c] + O2 + 8 H(+)(in) = 4 Fe(III)-[cytochrome c] + 2 H2O + 4 H(+)(out). Component of the cytochrome c oxidase, the last enzyme in the mitochondrial electron transport chain which drives oxidative phosphorylation. The respiratory chain contains 3 multisubunit complexes succinate dehydrogenase (complex II, CII), ubiquinol-cytochrome c oxidoreductase (cytochrome b-c1 complex, complex III, CIII) and cytochrome c oxidase (complex IV, CIV), that cooperate to transfer electrons derived from NADH and succinate to molecular oxygen, creating an electrochemical gradient over the inner membrane that drives transmembrane transport and the ATP synthase. Cytochrome c oxidase is the component of the respiratory chain that catalyzes the reduction of oxygen to water. Electrons originating from reduced cytochrome c in the intermembrane space (IMS) are transferred via the dinuclear copper A center (CU(A)) of subunit 2 and heme A of subunit 1 to the active site in subunit 1, a binuclear center (BNC) formed by heme A3 and copper B (CU(B)). The BNC reduces molecular oxygen to 2 water molecules using 4 electrons from cytochrome c in the IMS and 4 protons from the mitochondrial matrix. This Mus musculus (Mouse) protein is Cytochrome c oxidase subunit 2 (Mtco2).